The sequence spans 220 residues: 2-dehydro-3-deoxy-phosphogluconate aldolase (220 aa).

Glu48 functions as the Proton acceptor in the catalytic mechanism. 3 residues coordinate pyruvate: Arg52, Thr76, and Lys136. The active-site Schiff-base intermediate with substrate is the Lys136.

It belongs to the KHG/KDPG aldolase family. Homotrimer.

The catalysed reaction is 2-dehydro-3-deoxy-6-phospho-D-gluconate = D-glyceraldehyde 3-phosphate + pyruvate. The protein operates within carbohydrate acid metabolism; 2-dehydro-3-deoxy-D-gluconate degradation; D-glyceraldehyde 3-phosphate and pyruvate from 2-dehydro-3-deoxy-D-gluconate: step 2/2. In terms of biological role, involved in the degradation of glucose via the Entner-Doudoroff pathway. Catalyzes the reversible, stereospecific retro-aldol cleavage of 2-keto-3-deoxy-6-phosphogluconate (KDPG) to pyruvate and D-glyceraldehyde-3-phosphate. The chain is 2-dehydro-3-deoxy-phosphogluconate aldolase (eda) from Pseudomonas aeruginosa (strain ATCC 15692 / DSM 22644 / CIP 104116 / JCM 14847 / LMG 12228 / 1C / PRS 101 / PAO1).